We begin with the raw amino-acid sequence, 156 residues long: Anaerobic nitrite reductase HB2 (156 aa).

Residues 2-151 (GFTDKQEALV…LASAIKAEMH (150 aa)) form the Globin domain. The Homodimerization signature appears at 35-39 (EIAPV). Heme b contacts are provided by serine 45, lysine 59, histidine 63, and histidine 98. Positions 105–117 (DPHFEVVKEALLR) match the Homodimerization motif.

It belongs to the plant globin family. As to quaternary structure, homodimer. Requires heme b as cofactor.

Its subcellular location is the cytoplasm. The protein localises to the nucleus. The enzyme catalyses Fe(III)-heme b-[protein] + nitric oxide + H2O = Fe(II)-heme b-[protein] + nitrite + 2 H(+). Its function is as follows. Phytoglobin that reduces nitrite to nitric oxide (NO) under anoxic conditions (e.g. during flooding or in waterlogged soil). May not function as an oxygen storage or transport protein. Has an unusually high affinity for O(2) through an hexacoordinate heme iron because of a very low dissociation constant. This Solanum lycopersicum (Tomato) protein is Anaerobic nitrite reductase HB2.